A 183-amino-acid polypeptide reads, in one-letter code: Small ribosomal subunit protein eS10z (183 aa).

The tract at residues 91 to 183 is disordered; sequence LKKSARPPGR…GAGPTSSSME (93 aa). Residues 109 to 130 show a composition bias toward basic and acidic residues; that stretch reads DRPRGPPRFEGDRPRFGDRDGY. Composition is skewed to gly residues over residues 131 to 146 and 161 to 175; these read RGGPRGAPGDFGGEKG and GRPGFGRGGGGGFGA.

It belongs to the eukaryotic ribosomal protein eS10 family.

Its subcellular location is the cytoplasm. The polypeptide is Small ribosomal subunit protein eS10z (Oryza sativa subsp. japonica (Rice)).